A 213-amino-acid polypeptide reads, in one-letter code: Pyridoxine/pyridoxamine 5'-phosphate oxidase (213 aa).

Residues 9-12 and Lys-67 each bind substrate; that span reads RLEY. FMN is bound by residues 62–67, 77–78, Arg-83, Lys-84, and Gln-106; these read RIVLLK and YT. Tyr-124, Arg-128, and Ser-132 together coordinate substrate. Residues 141–142 and Trp-185 each bind FMN; that span reads QS. 191 to 193 contributes to the substrate binding site; the sequence is RLH. Arg-195 serves as a coordination point for FMN.

Belongs to the pyridoxamine 5'-phosphate oxidase family. Homodimer. FMN is required as a cofactor.

The catalysed reaction is pyridoxamine 5'-phosphate + O2 + H2O = pyridoxal 5'-phosphate + H2O2 + NH4(+). It catalyses the reaction pyridoxine 5'-phosphate + O2 = pyridoxal 5'-phosphate + H2O2. The protein operates within cofactor metabolism; pyridoxal 5'-phosphate salvage; pyridoxal 5'-phosphate from pyridoxamine 5'-phosphate: step 1/1. It functions in the pathway cofactor metabolism; pyridoxal 5'-phosphate salvage; pyridoxal 5'-phosphate from pyridoxine 5'-phosphate: step 1/1. Catalyzes the oxidation of either pyridoxine 5'-phosphate (PNP) or pyridoxamine 5'-phosphate (PMP) into pyridoxal 5'-phosphate (PLP). The chain is Pyridoxine/pyridoxamine 5'-phosphate oxidase from Chromobacterium violaceum (strain ATCC 12472 / DSM 30191 / JCM 1249 / CCUG 213 / NBRC 12614 / NCIMB 9131 / NCTC 9757 / MK).